The chain runs to 142 residues: Large ribosomal subunit protein uL13 (142 aa).

This sequence belongs to the universal ribosomal protein uL13 family. In terms of assembly, part of the 50S ribosomal subunit.

In terms of biological role, this protein is one of the early assembly proteins of the 50S ribosomal subunit, although it is not seen to bind rRNA by itself. It is important during the early stages of 50S assembly. In Aliivibrio fischeri (strain ATCC 700601 / ES114) (Vibrio fischeri), this protein is Large ribosomal subunit protein uL13.